Consider the following 93-residue polypeptide: U8-theraphotoxin-Hs1b (93 aa).

Residues 1–18 form the signal peptide; it reads MKAILLLAIFSVLTVAIC. Cystine bridges form between Cys40/Cys54, Cys40/Cys81, Cys53/Cys66, and Cys84/Cys91.

This sequence belongs to the neurotoxin 27 (Jztx-72) family. ICK-72 subfamily. In terms of tissue distribution, expressed by the venom gland.

Its subcellular location is the secreted. Functionally, probable neurotoxin with ion channel impairing activity. The polypeptide is U8-theraphotoxin-Hs1b (Cyriopagopus schmidti (Chinese bird spider)).